The following is a 288-amino-acid chain: MSQISAADVKNLRDITGAGMMDCKKALDETGGDMQQAIDFLRKKGAALAAKRADREAHEGMIQVKLANDCKRGVLLELNCETDFVARGNDFTSFTAALSELALSQCVASAEAMLPLALGAAYDGETVDSAMKTMTGKLGEKINLKRLAFFDMPDGVVEGYIHPGAKLGAIVSLKTDKPELVGELAKDLAMQIAAAAPIVVDRSGVPADYIAKEAEIYRQQALEQGKKEEFVDKIVTGRLEKYYQDVVLTEQVFIKDDKLKVSAMLDQFRKKNQATLDVVGFVRYQLGE.

Residues 82 to 85 (TDFV) are involved in Mg(2+) ion dislocation from EF-Tu.

This sequence belongs to the EF-Ts family.

Its subcellular location is the cytoplasm. In terms of biological role, associates with the EF-Tu.GDP complex and induces the exchange of GDP to GTP. It remains bound to the aminoacyl-tRNA.EF-Tu.GTP complex up to the GTP hydrolysis stage on the ribosome. The chain is Elongation factor Ts from Chlorobium chlorochromatii (strain CaD3).